Consider the following 393-residue polypeptide: Probable acetyl-CoA acyltransferase (393 aa).

Cys-88 acts as the Acyl-thioester intermediate in catalysis. Residues His-349 and Cys-378 each act as proton acceptor in the active site.

It belongs to the thiolase-like superfamily. Thiolase family.

It is found in the cytoplasm. The catalysed reaction is 2 acetyl-CoA = acetoacetyl-CoA + CoA. This is Probable acetyl-CoA acyltransferase from Staphylococcus aureus (strain MSSA476).